A 71-amino-acid chain; its full sequence is Small ribosomal subunit protein bS21 (71 aa).

The protein belongs to the bacterial ribosomal protein bS21 family.

The polypeptide is Small ribosomal subunit protein bS21 (Shewanella woodyi (strain ATCC 51908 / MS32)).